We begin with the raw amino-acid sequence, 127 residues long: MTITMLKSKIHRATVTEANLNYVGSITIDKYLMDKANILEYEKVQIVDIDNGNRFETYVIAGEKHSGVICLNGAAARMVQKGDKIIIMSYCSLTIDEANKFNPTVLFVDNKNNIEKLTNYEKHGEII.

Ser-25 (schiff-base intermediate with substrate; via pyruvic acid) is an active-site residue. Ser-25 carries the post-translational modification Pyruvic acid (Ser). Residue Thr-57 coordinates substrate. The active-site Proton donor is Tyr-58. 73–75 (GAA) provides a ligand contact to substrate.

It belongs to the PanD family. As to quaternary structure, heterooctamer of four alpha and four beta subunits. It depends on pyruvate as a cofactor. In terms of processing, is synthesized initially as an inactive proenzyme, which is activated by self-cleavage at a specific serine bond to produce a beta-subunit with a hydroxyl group at its C-terminus and an alpha-subunit with a pyruvoyl group at its N-terminus.

The protein localises to the cytoplasm. The catalysed reaction is L-aspartate + H(+) = beta-alanine + CO2. Its pathway is cofactor biosynthesis; (R)-pantothenate biosynthesis; beta-alanine from L-aspartate: step 1/1. Its function is as follows. Catalyzes the pyruvoyl-dependent decarboxylation of aspartate to produce beta-alanine. The protein is Aspartate 1-decarboxylase of Clostridium botulinum (strain Okra / Type B1).